The primary structure comprises 244 residues: LexA repressor (244 aa).

The segment at 1-24 (MSDSSDTTVDGASDGASDGASGAD) is disordered. The span at 10-24 (DGASDGASDGASGAD) shows a compositional bias: low complexity. Positions 58–78 (IREIGDAVGLTSTSSVAHQLR) form a DNA-binding region, H-T-H motif. Catalysis depends on for autocatalytic cleavage activity residues serine 168 and lysine 205.

Belongs to the peptidase S24 family. Homodimer.

The catalysed reaction is Hydrolysis of Ala-|-Gly bond in repressor LexA.. Functionally, represses a number of genes involved in the response to DNA damage (SOS response), including recA and lexA. In the presence of single-stranded DNA, RecA interacts with LexA causing an autocatalytic cleavage which disrupts the DNA-binding part of LexA, leading to derepression of the SOS regulon and eventually DNA repair. The sequence is that of LexA repressor from Mycobacterium ulcerans (strain Agy99).